A 237-amino-acid polypeptide reads, in one-letter code: Octopine transport system permease protein OccQ (237 aa).

The ABC transmembrane type-1 domain maps to 22 to 222 (TGMTVAVASS…LITFISGQAF (201 aa)). A run of 4 helical transmembrane segments spans residues 24–44 (MTVA…CLGA), 72–92 (LVIY…GSLF), 96–116 (GFVS…VSAA), and 201–221 (FSFY…SGQA).

It belongs to the binding-protein-dependent transport system permease family. HisMQ subfamily.

The protein resides in the cell inner membrane. Component of the octopine active transport system probably consisting of four subunits: Q, M, P and T. This Rhizobium meliloti (Ensifer meliloti) protein is Octopine transport system permease protein OccQ (occQ).